A 309-amino-acid chain; its full sequence is CDK-activating kinase assembly factor MAT1 (309 aa).

An RING-type zinc finger spans residues 6-50 (CPRCKTTKYRNPSLKLMVNVCGHTLCESCVELLFVRGSGSCQECD). A UIM domain is found at 142-161 (REQEELEEALEMEKHENEQR).

In terms of assembly, associates with CDK7 and cyclin H.

Its subcellular location is the nucleus. Functionally, stabilizes the cyclin H-CDK7 complex to form a functional CDK-activating kinase (CAK) enzymatic complex. The sequence is that of CDK-activating kinase assembly factor MAT1 (mnat1) from Xenopus laevis (African clawed frog).